The sequence spans 351 residues: Nuclear inhibitor of protein phosphatase 1 (351 aa).

The interval 1–142 (MAAAANSGSS…LPSAVKGDEK (142 aa)) is interaction with CDC5L, SF3B1 and MELK. The 53-residue stretch at 49-101 (YLFGRNPDLCDFTIDHQSCSRVHAALVYHKHLKRVFLIDLNSTHGTFLGHIRL) folds into the FHA domain. The segment at 143 to 224 (MGGEDDELKG…VDPSVGRFRN (82 aa)) is interaction with EED. Thr161 carries the post-translational modification Phosphothreonine. A phosphoserine mark is found at Ser178 and Ser199. 2 short sequence motifs (nuclear localization signal) span residues 185 to 209 (GNLDIQRPKRKRKNSRVTFSEDDEI) and 210 to 240 (INPEDVDPSVGRFRNMVQTAVVPVKKKRVEG). The involved in PP-1 inhibition stretch occupies residues 191-200 (RPKRKRKNSR). An involved in PP-1 binding region spans residues 200-203 (RVTF). The residue at position 204 (Ser204) is a Phosphoserine. Ser249 is subject to Phosphoserine. At Tyr264 the chain carries Phosphotyrosine; by LYN; in vitro. An interaction with EED region spans residues 310 to 329 (AVNMNPAPNPAVYNPEAVNE). Residues 316–351 (APNPAVYNPEAVNEPKKKKYAKEAWPGKKPTPSLLI) form a disordered region. Positions 330 to 351 (PKKKKYAKEAWPGKKPTPSLLI) are RNA-binding. The interval 331–337 (KKKKYAK) is involved in PP-1 inhibition. Tyr335 is subject to Phosphotyrosine.

Interacts with phosphorylated CDC5L, SF3B1 and MELK. Interacts with EED, in a nucleic acid-stimulated manner. Part of a complex consisting of PPP1R8, EED, HDAC2 and PP-1. Part of the spliceosome. Interacts with PPP1CA, PPP1CB and PPP1CC. Requires Mg(2+) as cofactor. In terms of processing, may be inactivated by phosphorylation on Ser-199 or Ser-204. Phosphorylated by Lyn in vitro on Tyr-264, and also on Tyr-335 in the presence of RNA. Ubiquitously expressed, with highest levels in heart and skeletal muscle, followed by brain, placenta, lung, liver and pancreas. Less abundant in kidney. The concentration and ratio between isoforms is cell-type dependent. Isoform Alpha (&gt;90%) and isoform Beta were found in brain, heart and kidney. Isoform Gamma is mainly found in B-cells and T-lymphocytes, and has been found in 293 embryonic kidney cells.

The protein localises to the nucleus. The protein resides in the nucleus speckle. It is found in the cytoplasm. Inhibitor subunit of the major nuclear protein phosphatase-1 (PP-1). It has RNA-binding activity but does not cleave RNA and may target PP-1 to RNA-associated substrates. May also be involved in pre-mRNA splicing. Binds DNA and might act as a transcriptional repressor. Seems to be required for cell proliferation. Its function is as follows. Isoform Gamma is a site-specific single-strand endoribonuclease that cleaves single strand RNA 3' to purines and pyrimidines in A+U-rich regions. It generates 5'-phosphate termini at the site of cleavage. This isoform does not inhibit PP-1. May be implicated in mRNA splicing. This is Nuclear inhibitor of protein phosphatase 1 (PPP1R8) from Homo sapiens (Human).